Consider the following 210-residue polypeptide: T-cell surface glycoprotein CD8 beta chain (210 aa).

Residues 1–21 form the signal peptide; sequence MRPRLWLLLAAQLTVLHGNSV. One can recognise an Ig-like V-type domain in the interval 22-132; it reads LQQTPAYIKV…ELTFGKGTQL (111 aa). The Extracellular portion of the chain corresponds to 22 to 170; sequence LQQTPAYIKV…ETQKGPLCSP (149 aa). C41 and C116 are disulfide-bonded. N102 is a glycosylation site (N-linked (GlcNAc...) asparagine). A helical transmembrane segment spans residues 171-191; that stretch reads ITLGLLVAGVLVLLVSLGVAI. Residues 192–210 are Cytoplasmic-facing; it reads HLCCRRRRARLRFMKQFYK. Position 209 is a phosphotyrosine (Y209).

Forms disulfide-linked heterodimers with CD8A at the cell surface. Interacts with CD3D; this interaction couples TCR-CD3 with CD8. Interacts with LCK. In terms of processing, phosphorylated as a consequence of T-cell activation. Post-translationally, palmitoylated at the cytoplasmic tail and thereby targets the heterodimer CD8A/CD8B to lipid rafts unlike CD8A homodimers. Isoform 1, isoform 3, isoform 5, isoform 6, isoform 7 and isoform 8 are expressed in both thymus and peripheral CD8+ T-cells. Expression of isoform 1 is higher in thymus CD8+ T-cells than in peripheral CD8+ T-cells. Expression of isoform 6 is higher in peripheral CD8+ T-cells than in thymus CD8+ T-cells.

It is found in the cell membrane. Its subcellular location is the secreted. Integral membrane glycoprotein that plays an essential role in the immune response and serves multiple functions in responses against both external and internal offenses. In T-cells, functions primarily as a coreceptor for MHC class I molecule:peptide complex. The antigens presented by class I peptides are derived from cytosolic proteins while class II derived from extracellular proteins. Interacts simultaneously with the T-cell receptor (TCR) and the MHC class I proteins presented by antigen presenting cells (APCs). In turn, recruits the Src kinase LCK to the vicinity of the TCR-CD3 complex. A palmitoylation site in the cytoplasmic tail of CD8B chain contributes to partitioning of CD8 into the plasma membrane lipid rafts where signaling proteins are enriched. Once LCK recruited, it initiates different intracellular signaling pathways by phosphorylating various substrates ultimately leading to lymphokine production, motility, adhesion and activation of cytotoxic T-lymphocytes (CTLs). Additionally, plays a critical role in thymic selection of CD8+ T-cells. The protein is T-cell surface glycoprotein CD8 beta chain (CD8B) of Homo sapiens (Human).